The following is a 535-amino-acid chain: 4-hydroxy-3-methylbut-2-enyl diphosphate reductase, apicoplast (535 aa).

C231 is a [4Fe-4S] cluster binding site. Residues H260 and H293 each contribute to the (2E)-4-hydroxy-3-methylbut-2-enyl diphosphate site. The dimethylallyl diphosphate site is built by H260 and H293. Isopentenyl diphosphate-binding residues include H260 and H293. Residue C315 coordinates [4Fe-4S] cluster. H343 is a (2E)-4-hydroxy-3-methylbut-2-enyl diphosphate binding site. H343 is a binding site for dimethylallyl diphosphate. H343 contacts isopentenyl diphosphate. Residue E345 is the Proton donor of the active site. A (2E)-4-hydroxy-3-methylbut-2-enyl diphosphate-binding site is contributed by T383. C413 serves as a coordination point for [4Fe-4S] cluster. (2E)-4-hydroxy-3-methylbut-2-enyl diphosphate is bound by residues S441, S442, N443, and S485. Residues S441, S442, N443, and S485 each coordinate dimethylallyl diphosphate. Isopentenyl diphosphate contacts are provided by S441, S442, N443, and S485.

It belongs to the IspH family. In terms of assembly, interacts with Fd/ferredoxin. Requires [4Fe-4S] cluster as cofactor.

It localises to the plastid. It is found in the apicoplast. The enzyme catalyses dimethylallyl diphosphate + 2 oxidized [2Fe-2S]-[ferredoxin] + H2O = (2E)-4-hydroxy-3-methylbut-2-enyl diphosphate + 2 reduced [2Fe-2S]-[ferredoxin] + 2 H(+). The catalysed reaction is isopentenyl diphosphate + 2 oxidized [2Fe-2S]-[ferredoxin] + H2O = (2E)-4-hydroxy-3-methylbut-2-enyl diphosphate + 2 reduced [2Fe-2S]-[ferredoxin] + 2 H(+). The protein operates within isoprenoid biosynthesis; dimethylallyl diphosphate biosynthesis; dimethylallyl diphosphate from (2E)-4-hydroxy-3-methylbutenyl diphosphate: step 1/1. Its pathway is isoprenoid biosynthesis; isopentenyl diphosphate biosynthesis via DXP pathway; isopentenyl diphosphate from 1-deoxy-D-xylulose 5-phosphate: step 6/6. Functionally, catalyzes the conversion of 1-hydroxy-2-methyl-2-(E)-butenyl 4-diphosphate (HMBPP) into a mixture of isopentenyl diphosphate (IPP) and dimethylallyl diphosphate (DMAPP). Acts in the terminal step of the DOXP/MEP pathway for isoprenoid precursor biosynthesis. The sequence is that of 4-hydroxy-3-methylbut-2-enyl diphosphate reductase, apicoplast from Plasmodium falciparum (isolate 3D7).